The sequence spans 863 residues: Eukaryotic translation initiation factor 3 subunit C (863 aa).

The interval 1–92 (MSRFFRGGDD…VKSAKDKRFD (92 aa)) is disordered. Over residues 16 to 53 (SSDEEELYSTSEEEEEEDQDQEESSEEEDEEESSDEDE) the composition is skewed to acidic residues. Residues 79–92 (GATKVKSAKDKRFD) are compositionally biased toward basic and acidic residues. The region spanning 604–778 (FHMHINLELL…KTVIFRKGVE (175 aa)) is the PCI domain. Positions 808–863 (TQGSANAFSRKDGRQGGQRGGGQRSGRGGARAGGNAQRQAGGTQFTGGALGAAVRG) are disordered. Positions 822-839 (QGGQRGGGQRSGRGGARA) are enriched in gly residues. Residues 840 to 850 (GGNAQRQAGGT) are compositionally biased toward low complexity.

This sequence belongs to the eIF-3 subunit C family. In terms of assembly, component of the eukaryotic translation initiation factor 3 (eIF-3) complex.

The protein resides in the cytoplasm. Functionally, component of the eukaryotic translation initiation factor 3 (eIF-3) complex, which is involved in protein synthesis of a specialized repertoire of mRNAs and, together with other initiation factors, stimulates binding of mRNA and methionyl-tRNAi to the 40S ribosome. The eIF-3 complex specifically targets and initiates translation of a subset of mRNAs involved in cell proliferation. The chain is Eukaryotic translation initiation factor 3 subunit C from Chaetomium globosum (strain ATCC 6205 / CBS 148.51 / DSM 1962 / NBRC 6347 / NRRL 1970) (Soil fungus).